The primary structure comprises 273 residues: NH(3)-dependent NAD(+) synthetase (273 aa).

45-52 serves as a coordination point for ATP; that stretch reads GISGGQDS. Asp51 is a Mg(2+) binding site. Arg139 is a deamido-NAD(+) binding site. Thr159 contacts ATP. Mg(2+) is bound at residue Glu164. Lys172 and Asp179 together coordinate deamido-NAD(+). Residues Lys188 and Thr210 each contribute to the ATP site. 259-260 provides a ligand contact to deamido-NAD(+); that stretch reads HK.

Belongs to the NAD synthetase family. In terms of assembly, homodimer.

The catalysed reaction is deamido-NAD(+) + NH4(+) + ATP = AMP + diphosphate + NAD(+) + H(+). It participates in cofactor biosynthesis; NAD(+) biosynthesis; NAD(+) from deamido-NAD(+) (ammonia route): step 1/1. Functionally, catalyzes the ATP-dependent amidation of deamido-NAD to form NAD. Uses ammonia as a nitrogen source. The chain is NH(3)-dependent NAD(+) synthetase from Bacillus pumilus (strain SAFR-032).